Here is a 426-residue protein sequence, read N- to C-terminus: Serine--tRNA ligase (426 aa).

230–232 provides a ligand contact to L-serine; the sequence is TAE. 261–263 is an ATP binding site; that stretch reads RSE. Glu-284 contacts L-serine. An ATP-binding site is contributed by 348 to 351; sequence EISS. Ser-384 is a binding site for L-serine.

It belongs to the class-II aminoacyl-tRNA synthetase family. Type-1 seryl-tRNA synthetase subfamily. As to quaternary structure, homodimer. The tRNA molecule binds across the dimer.

The protein localises to the cytoplasm. It catalyses the reaction tRNA(Ser) + L-serine + ATP = L-seryl-tRNA(Ser) + AMP + diphosphate + H(+). The enzyme catalyses tRNA(Sec) + L-serine + ATP = L-seryl-tRNA(Sec) + AMP + diphosphate + H(+). It functions in the pathway aminoacyl-tRNA biosynthesis; selenocysteinyl-tRNA(Sec) biosynthesis; L-seryl-tRNA(Sec) from L-serine and tRNA(Sec): step 1/1. Functionally, catalyzes the attachment of serine to tRNA(Ser). Is also able to aminoacylate tRNA(Sec) with serine, to form the misacylated tRNA L-seryl-tRNA(Sec), which will be further converted into selenocysteinyl-tRNA(Sec). This is Serine--tRNA ligase from Erythrobacter litoralis (strain HTCC2594).